Here is a 543-residue protein sequence, read N- to C-terminus: Sodium/glucose cotransporter (543 aa).

Helical transmembrane passes span 10-30 (FIDIMVFAIYVAIIIGVGLWV), 45-65 (FLAGKSLPWWAVGASLIAANI), 79-99 (SIGLAIASYEWMSAITLIIVG), 129-149 (ILAVFWISLYIFVNLTSVLYL), 156-176 (TILGIPLMYSILGLALFALVY), 193-213 (VFFLVLGGFMTTYMAVSFIGG), 246-266 (LPGIAVLIGGLWVANLYYWGF), 287-307 (IVFAAFLKLIVPFLVVLPGIA), 345-365 (FLPVGVKGVVFAALAAAIVSS), 401-421 (TAAVVALIIACLIAPMLGGIG), 427-447 (IQEYTGLVSPGILAVFLLGLF), 455-475 (GAIIGVVASIPFALFLKFMPL), 483-503 (MLYTLLFTMVVIAFTSLSTSI), and 523-543 (SFNIAAYGIMIVLAVLYTLFW).

It is found in the cell membrane. Its function is as follows. Actively transports glucose into cells by Na(+) cotransport. The protein is Sodium/glucose cotransporter (sglT) of Vibrio parahaemolyticus.